The following is a 585-amino-acid chain: Formate--tetrahydrofolate ligase (585 aa).

ATP is bound at residue 74 to 81 (TPLGEGKT).

It belongs to the formate--tetrahydrofolate ligase family.

It carries out the reaction (6S)-5,6,7,8-tetrahydrofolate + formate + ATP = (6R)-10-formyltetrahydrofolate + ADP + phosphate. It participates in one-carbon metabolism; tetrahydrofolate interconversion. The chain is Formate--tetrahydrofolate ligase from Yersinia enterocolitica serotype O:8 / biotype 1B (strain NCTC 13174 / 8081).